The following is a 346-amino-acid chain: Methylthioribose-1-phosphate isomerase 1 (346 aa).

Residues arginine 48–alanine 50, arginine 91, and glutamine 196 each bind substrate. Aspartate 237 functions as the Proton donor in the catalytic mechanism. Substrate is bound at residue asparagine 247–lysine 248.

Belongs to the eIF-2B alpha/beta/delta subunits family. MtnA subfamily.

It catalyses the reaction 5-(methylsulfanyl)-alpha-D-ribose 1-phosphate = 5-(methylsulfanyl)-D-ribulose 1-phosphate. Its pathway is amino-acid biosynthesis; L-methionine biosynthesis via salvage pathway; L-methionine from S-methyl-5-thio-alpha-D-ribose 1-phosphate: step 1/6. Catalyzes the interconversion of methylthioribose-1-phosphate (MTR-1-P) into methylthioribulose-1-phosphate (MTRu-1-P). This chain is Methylthioribose-1-phosphate isomerase 1, found in Pseudothermotoga lettingae (strain ATCC BAA-301 / DSM 14385 / NBRC 107922 / TMO) (Thermotoga lettingae).